The following is a 111-amino-acid chain: Rhodanese domain-containing protein CG4456 (111 aa).

Residues 12-110 (NHPDVYLIDV…SWNEWAQKEG (99 aa)) enclose the Rhodanese domain.

The chain is Rhodanese domain-containing protein CG4456 from Drosophila melanogaster (Fruit fly).